A 702-amino-acid chain; its full sequence is Polyribonucleotide nucleotidyltransferase (702 aa).

2 residues coordinate Mg(2+): Asp-485 and Asp-491. The 61-residue stretch at 552 to 612 folds into the KH domain; it reads PRTEIICIDP…EGVKKAISII (61 aa). The 69-residue stretch at 622–690 folds into the S1 motif domain; sequence GEIYLGKVTK…NQGRINLSRK (69 aa).

It belongs to the polyribonucleotide nucleotidyltransferase family. Mg(2+) serves as cofactor.

It is found in the cytoplasm. The catalysed reaction is RNA(n+1) + phosphate = RNA(n) + a ribonucleoside 5'-diphosphate. In terms of biological role, involved in mRNA degradation. Catalyzes the phosphorolysis of single-stranded polyribonucleotides processively in the 3'- to 5'-direction. In Clostridium botulinum (strain Langeland / NCTC 10281 / Type F), this protein is Polyribonucleotide nucleotidyltransferase.